The following is a 313-amino-acid chain: tRNA dimethylallyltransferase (313 aa).

13 to 20 (GPTASGKT) is a binding site for ATP. 15-20 (TASGKT) lines the substrate pocket. Interaction with substrate tRNA stretches follow at residues 38–41 (DSAL), 162–166 (QRLSR), 243–248 (RCVGYR), and 276–283 (KRQITWLR).

This sequence belongs to the IPP transferase family. As to quaternary structure, monomer. Requires Mg(2+) as cofactor.

The enzyme catalyses adenosine(37) in tRNA + dimethylallyl diphosphate = N(6)-dimethylallyladenosine(37) in tRNA + diphosphate. Functionally, catalyzes the transfer of a dimethylallyl group onto the adenine at position 37 in tRNAs that read codons beginning with uridine, leading to the formation of N6-(dimethylallyl)adenosine (i(6)A). The sequence is that of tRNA dimethylallyltransferase from Aliivibrio salmonicida (strain LFI1238) (Vibrio salmonicida (strain LFI1238)).